The following is a 259-amino-acid chain: uncharacterized protein (259 aa).

The disordered stretch occupies residues 171-259; sequence LSKMPVPQSP…SYSTYEDDDF (89 aa). Over residues 179–201 the composition is skewed to polar residues; it reads SPSVPTMPSVNNDQPTQKPNKIT. Residues 202-211 are compositionally biased toward basic residues; sequence RNYKPKHQHN. Over residues 212-236 the composition is skewed to polar residues; the sequence is YKPNYQPNYQPNYGQNCSNSHSNDY.

Its subcellular location is the virion. This is an uncharacterized protein from Acanthamoeba polyphaga (Amoeba).